We begin with the raw amino-acid sequence, 542 residues long: Phosphoglucomutase (542 aa).

Residues Thr-17, Arg-21, Ser-112–His-113, and Lys-125 contribute to the substrate site. The active-site Phosphoserine intermediate is Ser-112. Ser-112 lines the Mg(2+) pocket. Mg(2+) contacts are provided by Asp-276, Asp-278, and Asp-280. Substrate is bound by residues Asp-280 to Arg-281, Thr-343, Glu-362 to Ser-364, Lys-375, and Arg-495.

It belongs to the phosphohexose mutase family. Requires Mg(2+) as cofactor.

It carries out the reaction alpha-D-glucose 1-phosphate = alpha-D-glucose 6-phosphate. Functionally, this enzyme participates in both the breakdown and synthesis of glucose. Required for the synthesis of capsular polysaccharide and normal lipopolysaccharide. The sequence is that of Phosphoglucomutase (pgm) from Rhizobium radiobacter (Agrobacterium tumefaciens).